A 440-amino-acid polypeptide reads, in one-letter code: GTPase Der (440 aa).

2 EngA-type G domains span residues 4 to 168 and 177 to 352; these read PIVA…NPED and IKVA…NQNA. GTP-binding positions include 10–17, 57–61, 120–123, 183–190, 230–234, and 295–298; these read GRPNVGKS, DTGGI, NKVD, GKPNVGKS, DTAGI, and NKWD. In terms of domain architecture, KH-like spans 353–437; it reads MRIPTGALNE…PIRFILREKT (85 aa).

It belongs to the TRAFAC class TrmE-Era-EngA-EngB-Septin-like GTPase superfamily. EngA (Der) GTPase family. As to quaternary structure, associates with the 50S ribosomal subunit.

GTPase that plays an essential role in the late steps of ribosome biogenesis. The chain is GTPase Der from Alkaliphilus oremlandii (strain OhILAs) (Clostridium oremlandii (strain OhILAs)).